A 778-amino-acid polypeptide reads, in one-letter code: Acyl-homoserine lactone acylase PvdQ (778 aa).

The first 25 residues, 1-25 (MTISRQFTGLTLAGLFLGLSLSAQA), serve as a signal peptide directing secretion. Residues 196–218 (IENNARAYQLADTRLQRFALDRG) constitute a propeptide, spacer peptide. Residue S219 is the Nucleophile of the active site.

The protein belongs to the peptidase S45 family. In terms of assembly, heterodimer of an alpha subunit and a beta subunit processed from the same precursor.

It is found in the periplasm. It catalyses the reaction an N-acyl-L-homoserine lactone + H2O = L-homoserine lactone + a carboxylate. Functionally, catalyzes the deacylation of acyl-homoserine lactone (AHL or acyl-HSL), releasing homoserine lactone (HSL) and the corresponding fatty acid. Possesses a specificity for the degradation of long-chain acyl-HSLs (side chains of 11 to 14 carbons in length). The protein is Acyl-homoserine lactone acylase PvdQ (pvdQ) of Pseudomonas fluorescens (strain Pf0-1).